A 593-amino-acid chain; its full sequence is Mitochondrial sodium/calcium exchanger protein (593 aa).

The N-terminal stretch at 1 to 20 is a signal peptide; the sequence is MGPLWALRVAGALSVAGVLA. The Extracellular segment spans residues 21 to 93; it reads GHDGSQRAGQ…GAFCTFPSSL (73 aa). N58 carries an N-linked (GlcNAc...) asparagine glycan. The helical transmembrane segment at 94–114 threads the bilayer; the sequence is LPLSVSLYALWLLYLFVILGV. Topologically, residues 115-135 are cytoplasmic; the sequence is TAEKFFCPNLSAISTNLKLSH. The chain crosses the membrane as a helical span at residues 136-158; the sequence is NGLGVVGHSLTPALHGVTFLAFG. The Extracellular portion of the chain corresponds to 159-178; it reads NGAPDIFSAVVAFSDPRTAG. A helical transmembrane segment spans residues 179–199; sequence LAVGAIFGAGIFVTTVVAGGI. Residues 200–215 lie on the Cytoplasmic side of the membrane; that stretch reads ALVKPFAAASRPFLRD. Residues 216 to 236 traverse the membrane as a helical segment; it reads VIFYMVAVFLTFLVLYFGYIT. Over 237 to 239 the chain is Extracellular; it reads LGE. The helical transmembrane segment at 240–260 threads the bilayer; it reads ALGYLGLYVFYVFTVVLCTWI. The Cytoplasmic portion of the chain corresponds to 261-334; it reads HRWQRGDGPP…KWRRKPWYWR (74 aa). Residues 268–277 show a composition bias toward pro residues; sequence GPPPPGPWEP. The disordered stretch occupies residues 268–291; it reads GPPPPGPWEPAIPTDAEEQESSGT. Residues 335-355 form a helical membrane-spanning segment; it reads LFKVLKVPVELVLLLTVPVVD. Over 356–369 the chain is Extracellular; it reads PDKDDLNWKRPLNC. Residues 370–390 form a helical membrane-spanning segment; sequence LHIVTGPLLCIFTLKSGAYGL. Over 391-395 the chain is Cytoplasmic; sequence YQIQG. A helical membrane pass occupies residues 396 to 416; the sequence is VFPVWALVALAGSVLAIIVFV. Over 417-428 the chain is Extracellular; that stretch reads TTHNEEPPKYHC. The chain crosses the membrane as a helical span at residues 429 to 449; sequence VFAFLGFLSSAMWINAAATEL. Topologically, residues 450–454 are cytoplasmic; the sequence is VNILR. The helical transmembrane segment at 455–475 threads the bilayer; the sequence is TLGIIFELSNTVLGLTLLAWG. Residues 476–496 lie on the Extracellular side of the membrane; it reads NSIGDTFSDLTMARQGYPRMA. The helical transmembrane segment at 497-517 threads the bilayer; it reads FSACFGGIIFNILVGVGLGCL. At 518–533 the chain is on the cytoplasmic side; that stretch reads LQMTNSQMVVKLEPDS. The helical transmembrane segment at 534–554 threads the bilayer; it reads LLVWILAGALGLSLVFSFVAV. Topologically, residues 555–564 are extracellular; that stretch reads PAQCFQLGKA. Residues 565 to 585 form a helical membrane-spanning segment; sequence YGTCLILYYLVFLCVALLTEF. Residues 586–593 are Cytoplasmic-facing; that stretch reads RVIHLAAT.

The protein belongs to the Ca(2+):cation antiporter (CaCA) (TC 2.A.19) family. SLC24A subfamily.

It is found in the mitochondrion inner membrane. It catalyses the reaction Ca(2+)(in) + 3 Na(+)(out) = Ca(2+)(out) + 3 Na(+)(in). Functionally, mitochondrial sodium/calcium antiporter that mediates sodium-dependent calcium efflux from mitochondrion, by mediating the exchange of 3 sodium ions per 1 calcium ion. Plays a central role in mitochondrial calcium homeostasis by mediating mitochondrial calcium extrusion: calcium efflux is essential for mitochondrial function and cell survival, notably in cardiomyocytes. Involved in B-lymphocyte chemotaxis. In Gallus gallus (Chicken), this protein is Mitochondrial sodium/calcium exchanger protein.